The following is a 248-amino-acid chain: Probable transcriptional regulatory protein Pcar_2335 (248 aa).

Belongs to the TACO1 family.

It localises to the cytoplasm. In Syntrophotalea carbinolica (strain DSM 2380 / NBRC 103641 / GraBd1) (Pelobacter carbinolicus), this protein is Probable transcriptional regulatory protein Pcar_2335.